Here is a 119-residue protein sequence, read N- to C-terminus: Ribonuclease (119 aa).

2 residues coordinate substrate: lysine 6 and arginine 9. The active-site Proton acceptor is histidine 11. Intrachain disulfides connect cysteine 26/cysteine 81, cysteine 40/cysteine 92, and cysteine 58/cysteine 107. Residues 41-45 and arginine 82 each bind substrate; that span reads KFTNT. The Proton donor role is filled by histidine 114.

Belongs to the pancreatic ribonuclease family. In terms of assembly, monomer. Interacts with and forms tight 1:1 complexes with RNH1. Dimerization of two such complexes may occur. Interaction with RNH1 inhibits this protein.

It is found in the secreted. It carries out the reaction an [RNA] containing cytidine + H2O = an [RNA]-3'-cytidine-3'-phosphate + a 5'-hydroxy-ribonucleotide-3'-[RNA].. The enzyme catalyses an [RNA] containing uridine + H2O = an [RNA]-3'-uridine-3'-phosphate + a 5'-hydroxy-ribonucleotide-3'-[RNA].. Its function is as follows. Endonuclease that catalyzes the cleavage of RNA on the 3' side of pyrimidine nucleotides. Acts on single-stranded and double-stranded RNA. This is Ribonuclease from Chelonia mydas (Green sea-turtle).